We begin with the raw amino-acid sequence, 587 residues long: Aspartate--tRNA ligase (587 aa).

Residue Glu174 participates in L-aspartate binding. An aspartate region spans residues 198–201 (QITK). Arg220 lines the L-aspartate pocket. Residues 220-222 (RDE) and Gln229 each bind ATP. L-aspartate is bound at residue His443. Glu477 lines the ATP pocket. L-aspartate is bound at residue Arg484. ATP is bound at residue 529–532 (GLDR).

This sequence belongs to the class-II aminoacyl-tRNA synthetase family. Type 1 subfamily. Homodimer.

It localises to the cytoplasm. It carries out the reaction tRNA(Asp) + L-aspartate + ATP = L-aspartyl-tRNA(Asp) + AMP + diphosphate. Its function is as follows. Catalyzes the attachment of L-aspartate to tRNA(Asp) in a two-step reaction: L-aspartate is first activated by ATP to form Asp-AMP and then transferred to the acceptor end of tRNA(Asp). The protein is Aspartate--tRNA ligase of Streptococcus pneumoniae serotype 19F (strain G54).